The chain runs to 326 residues: DnaJ homolog subfamily B member 6 (326 aa).

One can recognise a J domain in the interval 3 to 69 (DYYEVLGVQK…KKRDIYDRFG (67 aa)). The tract at residues 249-326 (ALPFQPTNTR…KKKKSTKGSY (78 aa)) is disordered. At Ser-277 the chain carries Phosphoserine.

Homooligomer.

The protein resides in the cytoplasm. It localises to the perinuclear region. The protein localises to the nucleus. Has a stimulatory effect on the ATPase activity of HSP70 in a dose-dependent and time-dependent manner and hence acts as a co-chaperone of HSP70. Plays an indispensable role in the organization of KRT8/KRT18 filaments. Acts as an endogenous molecular chaperone for neuronal proteins including huntingtin. Suppresses aggregation and toxicity of polyglutamine-containing, aggregation-prone proteins. Also reduces cellular toxicity and caspase-3 activity. This is DnaJ homolog subfamily B member 6 from Gallus gallus (Chicken).